The primary structure comprises 276 residues: Krueppel homolog 2 (276 aa).

The interval 1–37 (MSAPTDQPPRSEGAQTNSSERSSQQQEQPQQSQSQNV) is disordered. Positions 18–35 (SSERSSQQQEQPQQSQSQ) are enriched in low complexity. Ser-22 is subject to Phosphoserine. A run of 3 helical transmembrane segments spans residues 53 to 73 (ALWA…LPIF), 125 to 145 (LIFF…LYSV), and 181 to 201 (ILKA…VLAF).

The protein belongs to the PER33/POM33 family.

Its subcellular location is the membrane. In terms of biological role, member of the dosage-dependent hierarchy effective upon white gene expression. In Drosophila melanogaster (Fruit fly), this protein is Krueppel homolog 2 (Kr-h2).